We begin with the raw amino-acid sequence, 430 residues long: Trigger factor (430 aa).

The PPIase FKBP-type domain occupies 163–248; the sequence is GNIAIIDFKG…IKDIKVKELP (86 aa).

Belongs to the FKBP-type PPIase family. Tig subfamily.

Its subcellular location is the cytoplasm. It carries out the reaction [protein]-peptidylproline (omega=180) = [protein]-peptidylproline (omega=0). Involved in protein export. Acts as a chaperone by maintaining the newly synthesized protein in an open conformation. Functions as a peptidyl-prolyl cis-trans isomerase. The chain is Trigger factor from Clostridium botulinum (strain Kyoto / Type A2).